The following is a 555-amino-acid chain: Protein NRT1/ PTR FAMILY 2.1 (555 aa).

The next 12 membrane-spanning stretches (helical) occupy residues 32-52 (TLLG…VFLI), 68-88 (IVNG…DSFF), 91-111 (IPVI…LTLI), 127-147 (ILCQ…LALV), 175-195 (FFNW…TAIV), 205-225 (LGFG…ISGK), 324-344 (VLPL…QASM), 369-389 (VIVL…IYPI), 401-421 (LQQV…SAIV), 437-457 (VLWL…HYMA), 476-496 (SVTS…INLI), and 517-537 (WVLV…SWYF).

It belongs to the major facilitator superfamily. Proton-dependent oligopeptide transporter (POT/PTR) (TC 2.A.17) family. Expressed in roots.

The protein resides in the membrane. In terms of biological role, transporter involved in a passive nitrate efflux. The protein is Protein NRT1/ PTR FAMILY 2.1 (NPF2.1) of Arabidopsis thaliana (Mouse-ear cress).